Here is a 161-residue protein sequence, read N- to C-terminus: Large ribosomal subunit protein uL15 (161 aa).

The disordered stretch occupies residues 1–39 (MTKLNELAPREGSTKGRMRVGRGPGSGKGKTAGRGVKGQ). The span at 22-36 (RGPGSGKGKTAGRGV) shows a compositional bias: gly residues.

This sequence belongs to the universal ribosomal protein uL15 family. As to quaternary structure, part of the 50S ribosomal subunit.

Functionally, binds to the 23S rRNA. The sequence is that of Large ribosomal subunit protein uL15 from Caulobacter vibrioides (strain ATCC 19089 / CIP 103742 / CB 15) (Caulobacter crescentus).